A 901-amino-acid chain; its full sequence is Protein translocase subunit SecA (901 aa).

Residues Q87, 105–109 (GEGKT), and D512 contribute to the ATP site. The Zn(2+) site is built by C885, C887, C896, and H897.

It belongs to the SecA family. In terms of assembly, monomer and homodimer. Part of the essential Sec protein translocation apparatus which comprises SecA, SecYEG and auxiliary proteins SecDF-YajC and YidC. Requires Zn(2+) as cofactor.

The protein resides in the cell inner membrane. The protein localises to the cytoplasm. It catalyses the reaction ATP + H2O + cellular proteinSide 1 = ADP + phosphate + cellular proteinSide 2.. Its function is as follows. Part of the Sec protein translocase complex. Interacts with the SecYEG preprotein conducting channel. Has a central role in coupling the hydrolysis of ATP to the transfer of proteins into and across the cell membrane, serving both as a receptor for the preprotein-SecB complex and as an ATP-driven molecular motor driving the stepwise translocation of polypeptide chains across the membrane. In Salmonella typhi, this protein is Protein translocase subunit SecA.